The following is a 126-amino-acid chain: Ribosome-binding factor A (126 aa).

It belongs to the RbfA family. As to quaternary structure, monomer. Binds 30S ribosomal subunits, but not 50S ribosomal subunits or 70S ribosomes.

The protein resides in the cytoplasm. Its function is as follows. One of several proteins that assist in the late maturation steps of the functional core of the 30S ribosomal subunit. Associates with free 30S ribosomal subunits (but not with 30S subunits that are part of 70S ribosomes or polysomes). Required for efficient processing of 16S rRNA. May interact with the 5'-terminal helix region of 16S rRNA. The polypeptide is Ribosome-binding factor A (Histophilus somni (strain 129Pt) (Haemophilus somnus)).